Here is a 530-residue protein sequence, read N- to C-terminus: 2,3-bisphosphoglycerate-independent phosphoglycerate mutase (530 aa).

2 residues coordinate Mn(2+): Asp15 and Ser65. Ser65 acts as the Phosphoserine intermediate in catalysis. Substrate-binding positions include His126, Arg155 to Asp156, Arg187, Arg193, Arg257 to Arg260, and Lys330. Asp397, His401, Asp438, His439, and His456 together coordinate Mn(2+).

Belongs to the BPG-independent phosphoglycerate mutase family. In terms of assembly, monomer. Mn(2+) serves as cofactor.

It carries out the reaction (2R)-2-phosphoglycerate = (2R)-3-phosphoglycerate. The protein operates within carbohydrate degradation; glycolysis; pyruvate from D-glyceraldehyde 3-phosphate: step 3/5. Its function is as follows. Catalyzes the interconversion of 2-phosphoglycerate and 3-phosphoglycerate. The chain is 2,3-bisphosphoglycerate-independent phosphoglycerate mutase from Synechococcus sp. (strain JA-3-3Ab) (Cyanobacteria bacterium Yellowstone A-Prime).